The sequence spans 794 residues: Striatin-3 (794 aa).

The residue at position 1 (methionine 1) is an N-acetylmethionine. The segment covering methionine 1–glycine 12 has biased composition (gly residues). Positions methionine 1 to proline 59 are disordered. The segment at tyrosine 70 to phenylalanine 78 is caveolin-binding. Residues alanine 76–lysine 135 are a coiled coil. Threonine 149 is subject to Phosphothreonine. A calmodulin-binding region spans residues glutamine 164–leucine 181. Residues serine 200, serine 212, serine 227, serine 255, and serine 332 each carry the phosphoserine modification. Residues glutamate 309–aspartate 339 are disordered. WD repeat units lie at residues serine 475–lysine 514, alanine 528–tyrosine 567, alanine 581–cysteine 620, glutamine 676–serine 715, alanine 718–glutamate 757, and lysine 764–valine 794.

The protein belongs to the WD repeat striatin family. Tetramerizes. Part of the core of STRIPAK complexes composed of PP2A catalytic and scaffolding subunits, the striatins (PP2A regulatory subunits), the striatin-associated proteins MOB4, STRIP1 and STRIP2, PDCD10 and members of the STE20 kinases, such as STK24 and STK26. The STRIPAK complex can be extended by adapter proteins such as SLMAP:SIKE1 or CTTNBP2NL. Interacts with CDC42BPB.

Its subcellular location is the cytoplasm. The protein localises to the membrane. In terms of biological role, calmodulin-binding scaffolding protein which is the center of the striatin-interacting phosphatase and kinase (STRIPAK) complexes. STRIPAK complexes have critical roles in protein (de)phosphorylation and are regulators of multiple signaling pathways including Hippo, MAPK, nuclear receptor and cytoskeleton remodeling. Different types of STRIPAK complexes are involved in a variety of biological processes such as cell growth, differentiation, apoptosis, metabolism and immune regulation. The chain is Striatin-3 (Strn3) from Rattus norvegicus (Rat).